Reading from the N-terminus, the 118-residue chain is Large ribosomal subunit protein bL19 (118 aa).

The protein belongs to the bacterial ribosomal protein bL19 family.

In terms of biological role, this protein is located at the 30S-50S ribosomal subunit interface and may play a role in the structure and function of the aminoacyl-tRNA binding site. In Helicobacter hepaticus (strain ATCC 51449 / 3B1), this protein is Large ribosomal subunit protein bL19.